Here is a 51-residue protein sequence, read N- to C-terminus: GLWIKGNYCLRGRCLPGGRKCCNGRPCECFAKICSCKPKLIGKLSALKKHT.

4 disulfide bridges follow: cysteine 9–cysteine 22, cysteine 14–cysteine 27, cysteine 21–cysteine 36, and cysteine 29–cysteine 34.

Post-translationally, contains 4 disulfide bonds. In terms of tissue distribution, expressed by the venom gland.

Its subcellular location is the secreted. The sequence is that of Toxin CSTX-18 from Cupiennius salei (American wandering spider).